The primary structure comprises 346 residues: UDP-N-acetylenolpyruvoylglucosamine reductase (346 aa).

Residues 17 to 187 (IESQAYALIE…VAVGFTLKKE (171 aa)) form the FAD-binding PCMH-type domain. The active site involves Arg-163. Ser-233 serves as the catalytic Proton donor. Glu-329 is an active-site residue.

It belongs to the MurB family. Requires FAD as cofactor.

The protein localises to the cytoplasm. The enzyme catalyses UDP-N-acetyl-alpha-D-muramate + NADP(+) = UDP-N-acetyl-3-O-(1-carboxyvinyl)-alpha-D-glucosamine + NADPH + H(+). The protein operates within cell wall biogenesis; peptidoglycan biosynthesis. Its function is as follows. Cell wall formation. The polypeptide is UDP-N-acetylenolpyruvoylglucosamine reductase (Photobacterium profundum (strain SS9)).